Consider the following 705-residue polypeptide: ATP-dependent DNA helicase Q-like 2 (705 aa).

The stretch at 1–30 (MESEAIQEDLQNLDVELKDVQGQISALIEH) forms a coiled coil. Positions 98–273 (INAIMTGRDV…IEMLHIPKCV (176 aa)) constitute a Helicase ATP-binding domain. ATP is bound at residue 111 to 118 (MAAGGGKS). Residues 217–220 (DEAH) carry the DEAH box motif. The Helicase C-terminal domain occupies 298–450 (VVDEIAEFIR…DIVRYCQSKT (153 aa)). Positions 591-670 (SITFSGLELK…MRHEAVSEQL (80 aa)) constitute an HRDC domain. The segment at 668–705 (EQLVEDPTKEETCKSRLRKRAKTQKDVVLVESSGEEEA) is disordered.

This sequence belongs to the helicase family. RecQ subfamily. In terms of assembly, interacts with WEX. It depends on Mg(2+) as a cofactor. Mn(2+) serves as cofactor. As to expression, expressed in shoots and flowers. Expressed in young leaves, inflorescences, roots, shoot apical meristem, young siliques, and mature green siliques.

Its subcellular location is the nucleus. The catalysed reaction is Couples ATP hydrolysis with the unwinding of duplex DNA by translocating in the 3'-5' direction.. It catalyses the reaction ATP + H2O = ADP + phosphate + H(+). In terms of biological role, 3'-5' DNA helicase that may play a role in the repair of DNA. Its DNA unwinding activity in vitro is dependent on magnesium, and ATP or dATP. Can use GTP/dGTP, CTP/dCTP or UTP/dUTP as nucleotide cofactors. Catalyzes Holliday junction branch migration and replication fork regression. Disrupts D-loop structures. Unwinds G-quadruplex DNA, found in telomeric DNA. In Arabidopsis thaliana (Mouse-ear cress), this protein is ATP-dependent DNA helicase Q-like 2.